The following is a 957-amino-acid chain: MHVCCPPVTLEQDLHRKMHSWMLQTLAFAVTSLVLSCAETIDYYGEICDNACPCEEKDGILTVSCENRGIISLSEISPPRFPIYHLLLSGNLLSRLYPNEFVNYTGASILHLGSNVIQDIETGAFHGLRGLRRLHLNNNKLELLRDDTFLGLENLEYLQVDYNYISVIEPNAFGKLHMLQVLILNDNLLSGLPNNLFRFVPLTHLDLRGNRLKLLPYVGLLQHMDKVVELQLEENPWNCSCELISLKDWLDSISYSALVGDVVCETPFRLHGRDLDEVSKQELCPRKLISDYEMRPQTPLSTTGYLHTTPASVNSVATSSSAVYKPPLKPPKGTRQPNKPRVRPTSRQPSKDLGYSNYGPSIAYQTKSPVPLECPTACTCNLQISDLGLNVNCQERKIESIAELQPKPYNPKKMYLTENYITVVRRTDFLEATGLDLLHLGNNRISMIQDRAFGDLGNLRRLYLNGNRIERLSPELFYGLQSLQYLFLQYNLIREIQAGTFDPVPNLQLLFLNNNQLQAMPSGVFSGLTLLRLNLRGNSFTSLPVSGVLDQLTSLIQIDLHDNPWDCTCDVVGMKLWIEQLKVGVLVDEVICKAPKKFAETYMRSIKSELLCPDYSDVVVSTPTPSSIQVPSRTNAATPAVRLNSTGTPAGLGAGTGASSVPLSVLILSLLLVFIMSVFVAAGLFVLVMKRRKKNQSDHTSTNNSDVSSFNMQYSVYGGGGGGGGGHPHAHVHHRGPALPKVKTPAGHVYEYIPHPLGHMCKNPIYRSREGNSVEDYKDLHELKVTYSSNHHLQQQPPPPPQQPQQQPPPQMQMQPGEEERRESHHLRSPAYSVSTIEPREDLLSPVQDADRFYRGILEPDKHCSTTPAGSSLPEYPKFPCSPAAYTFSPNYDLRRPHQYLHPGAGESRLREPVLYSPPGAVFVEPNRNEYLELKAKLNVEPDYLEVLEKQTTFSQF.

The N-terminal stretch at 1–40 (MHVCCPPVTLEQDLHRKMHSWMLQTLAFAVTSLVLSCAET) is a signal peptide. The Extracellular portion of the chain corresponds to 41–664 (IDYYGEICDN…GTGASSVPLS (624 aa)). LRR repeat units lie at residues 82–103 (PIYHLLLSGNLLSRLYPNEFVN), 106–127 (GASILHLGSNVIQDIETGAFHG), 130–151 (GLRRLHLNNNKLELLRDDTFLG), 154–175 (NLEYLQVDYNYISVIEPNAFGK), 178–199 (MLQVLILNDNLLSGLPNNLFRF), and 201–222 (PLTHLDLRGNRLKLLPYVGLLQ). Residue Asn103 is glycosylated (N-linked (GlcNAc...) asparagine). The region spanning 235-286 (NPWNCSCELISLKDWLDSISYSALVGDVVCETPFRLHGRDLDEVSKQELCPR) is the LRRCT 1 domain. Residues 317–358 (ATSSSAVYKPPLKPPKGTRQPNKPRVRPTSRQPSKDLGYSNY) are disordered. Residues 365–407 (QTKSPVPLECPTACTCNLQISDLGLNVNCQERKIESIAELQPK) form the LRRNT domain. LRR repeat units lie at residues 410–431 (NPKKMYLTENYITVVRRTDFLE), 434–455 (GLDLLHLGNNRISMIQDRAFGD), 458–479 (NLRRLYLNGNRIERLSPELFYG), 482–503 (SLQYLFLQYNLIREIQAGTFDP), 506–527 (NLQLLFLNNNQLQAMPSGVFSG), and 529–550 (TLLRLNLRGNSFTSLPVSGVLD). In terms of domain architecture, LRRCT 2 spans 563–614 (NPWDCTCDVVGMKLWIEQLKVGVLVDEVICKAPKKFAETYMRSIKSELLCPD). Over residues 623–632 (PTPSSIQVPS) the composition is skewed to low complexity. The segment at 623–642 (PTPSSIQVPSRTNAATPAVR) is disordered. An N-linked (GlcNAc...) asparagine glycan is attached at Asn644. Residues 665–685 (VLILSLLLVFIMSVFVAAGLF) form a helical membrane-spanning segment. The Cytoplasmic segment spans residues 686 to 957 (VLVMKRRKKN…LEKQTTFSQF (272 aa)). The interval 789 to 844 (SNHHLQQQPPPPPQQPQQQPPPQMQMQPGEEERRESHHLRSPAYSVSTIEPREDLL) is disordered. A compositionally biased stretch (pro residues) spans 796-811 (QPPPPPQQPQQQPPPQ).

The protein belongs to the SLITRK family. In the adult, significant expression is detected only in the brain. In the embryo, expressed in the subventricular zone, cortical plate, pyramidal layer of hippocampus, thalamus and hypothalamus.

It is found in the membrane. Suppresses neurite outgrowth. This Mus musculus (Mouse) protein is SLIT and NTRK-like protein 5 (Slitrk5).